A 67-amino-acid polypeptide reads, in one-letter code: Neurotoxin Os3 (67 aa).

An LCN-type CS-alpha/beta domain is found at 3–67 (RDGYIAQPHN…GVIVDGEKCH (65 aa)). Disulfide bonds link cysteine 13–cysteine 66, cysteine 17–cysteine 39, cysteine 24–cysteine 48, and cysteine 28–cysteine 50.

It belongs to the long (4 C-C) scorpion toxin superfamily. Sodium channel inhibitor family. Alpha subfamily. Expressed by the venom gland.

It is found in the secreted. Binds to sodium channels (Nav) and inhibits the inactivation of the activated channels, thereby blocking neuronal transmission. In Orthochirus scrobiculosus (Central Asian scorpion), this protein is Neurotoxin Os3.